The chain runs to 392 residues: S-adenosylmethionine synthase (392 aa).

Residue histidine 20 coordinates ATP. Aspartate 22 contacts Mg(2+). A K(+)-binding site is contributed by glutamate 48. Residues glutamate 61 and glutamine 106 each contribute to the L-methionine site. Positions 106 to 116 are flexible loop; sequence QSQDIINAIKK. ATP is bound by residues 171–173, aspartate 248, 254–255, alanine 271, and lysine 275; these read DSK and RK. Aspartate 248 contacts L-methionine. Residue lysine 279 participates in L-methionine binding.

This sequence belongs to the AdoMet synthase family. As to quaternary structure, homotetramer; dimer of dimers. Mg(2+) is required as a cofactor. K(+) serves as cofactor.

The protein resides in the cytoplasm. It catalyses the reaction L-methionine + ATP + H2O = S-adenosyl-L-methionine + phosphate + diphosphate. The protein operates within amino-acid biosynthesis; S-adenosyl-L-methionine biosynthesis; S-adenosyl-L-methionine from L-methionine: step 1/1. Catalyzes the formation of S-adenosylmethionine (AdoMet) from methionine and ATP. The overall synthetic reaction is composed of two sequential steps, AdoMet formation and the subsequent tripolyphosphate hydrolysis which occurs prior to release of AdoMet from the enzyme. In Borrelia garinii subsp. bavariensis (strain ATCC BAA-2496 / DSM 23469 / PBi) (Borreliella bavariensis), this protein is S-adenosylmethionine synthase.